Reading from the N-terminus, the 777-residue chain is Aconitate hydratase, mitochondrial (777 aa).

Residues Gln96 and 189 to 191 contribute to the substrate site; that span reads DSH. The [4Fe-4S] cluster site is built by Cys383, Cys446, and Cys449. Substrate contacts are provided by residues Arg472, Arg477, Arg605, and 668–669; that span reads SR.

The protein belongs to the aconitase/IPM isomerase family. Monomer. [4Fe-4S] cluster serves as cofactor.

Its subcellular location is the mitochondrion. It carries out the reaction citrate = D-threo-isocitrate. It functions in the pathway carbohydrate metabolism; tricarboxylic acid cycle; isocitrate from oxaloacetate: step 2/2. Catalyzes the isomerization of citrate to isocitrate via cis-aconitate, a step in the citric acid cycle. The polypeptide is Aconitate hydratase, mitochondrial (ACO1) (Candida albicans (strain SC5314 / ATCC MYA-2876) (Yeast)).